The following is a 335-amino-acid chain: Transcriptional coactivator YAP1-B (335 aa).

The span at 1-13 shows a compositional bias: low complexity; it reads MEPGSQQQPSAPG. Positions 1–21 are disordered; it reads MEPGSQQQPSAPGQQPPPVGH. Position 30 is a phosphoserine; by LATS1 and LATS2 (Ser-30). The span at 114–124 shows a compositional bias: polar residues; it reads MNQQRLSQSAP. The segment at 114–146 is disordered; that stretch reads MNQQRLSQSAPVKSPPALQPQSPPSGVLGSGGN. Residues 126–136 are compositionally biased toward pro residues; sequence KSPPALQPQSP. Residues 137–335 form a transactivation domain region; that stretch reads PSGVLGSGGN…LDKESFLTWL (199 aa). Positions 145–173 form a coiled coil; that stretch reads GNQQMRLQQLQMEKERLRLKHQELLRQVR.

The protein belongs to the YAP1 family. In terms of processing, phosphorylated by lats1 and lats2; leading to cytoplasmic translocation and inactivation.

It is found in the cytoplasm. It localises to the nucleus. Its subcellular location is the cell junction. The protein resides in the tight junction. The protein localises to the cell membrane. In terms of biological role, transcriptional regulator which can act both as a coactivator and a corepressor and is the critical downstream regulatory target in the Hippo signaling pathway that plays a pivotal role in organ size control and tumor suppression by restricting proliferation and promoting apoptosis. Plays a key role in tissue tension and 3D tissue shape by regulating cortical actomyosin network formation. In Xenopus laevis (African clawed frog), this protein is Transcriptional coactivator YAP1-B.